The primary structure comprises 112 residues: Divalent-cation tolerance protein CutA (112 aa).

Positions 16, 83, and 84 each coordinate Cu cation.

This sequence belongs to the CutA family. As to quaternary structure, homotrimer. The cofactor is Cu cation.

Its subcellular location is the cytoplasm. In terms of biological role, involved in resistance toward heavy metals. The protein is Divalent-cation tolerance protein CutA of Shigella flexneri.